A 446-amino-acid chain; its full sequence is Neuropeptide Y receptor type 5 (446 aa).

Residues 1–42 lie on the Extracellular side of the membrane; sequence MDLELQDFYNKTLATENNTAATRNSDFPVWDDYKSSVDDLQY. N-linked (GlcNAc...) asparagine glycans are attached at residues asparagine 10 and asparagine 17. The helical transmembrane segment at 43-63 threads the bilayer; that stretch reads FLIGLYTFVSLLGFMGNLLIL. Residues 64–77 are Cytoplasmic-facing; that stretch reads MALMRKRNQKTMVN. Residues 78–98 form a helical membrane-spanning segment; it reads FLIGNLAFSDILVVLFCSPFT. Residues 99–117 lie on the Extracellular side of the membrane; sequence LTSVLLDQWMFGKVMCHIM. The cysteines at positions 114 and 198 are disulfide-linked. A helical transmembrane segment spans residues 118-138; it reads PFLQCVSVLVSTLILISIAIV. At 139–156 the chain is on the cytoplasmic side; it reads RYHMIKHPISNNLTANHG. Residues 157 to 177 traverse the membrane as a helical segment; it reads YFLIATVWTLGFAICSPLPVF. The Extracellular segment spans residues 178 to 208; that stretch reads HSLVELQETFDSALLSSRYLCVESWPSDSYR. Residues 209–229 form a helical membrane-spanning segment; that stretch reads IAFTISLLLVQYILPLVCLTV. Residues 230 to 369 are Cytoplasmic-facing; sequence SHTSVCRSIS…KKRSRSVFYR (140 aa). A helical membrane pass occupies residues 370-390; that stretch reads LTILILVFAVSWMPLHLFHVV. Residues 391-407 are Extracellular-facing; sequence TDFNDNLISNRHFKLVY. A helical transmembrane segment spans residues 408–428; that stretch reads CICHLLGMMSCCLNPILYGFL. The Cytoplasmic segment spans residues 429-446; the sequence is NNGIKADLISLIQCLHMS. Residue cysteine 442 is the site of S-palmitoyl cysteine attachment.

It belongs to the G-protein coupled receptor 1 family.

It is found in the cell membrane. Receptor for neuropeptide Y and peptide YY. The activity of this receptor is mediated by G proteins that inhibit adenylate cyclase activity. Seems to be associated with food intake. Could be involved in feeding disorders. In Canis lupus familiaris (Dog), this protein is Neuropeptide Y receptor type 5 (NPY5R).